Here is a 371-residue protein sequence, read N- to C-terminus: Probable beta-1,3-galactosyltransferase 12 (371 aa).

The tract at residues 1-36 (MPLFSHRFTTASSSSPASPSYYNKPSSKTHKPNSSS) is disordered. Residues 11–36 (ASSSSPASPSYYNKPSSKTHKPNSSS) are compositionally biased toward low complexity. Residues 46 to 66 (VAIIFFSLVSVFIGVAGTIFA) traverse the membrane as a helical; Signal-anchor for type II membrane protein segment. N291 carries N-linked (GlcNAc...) asparagine glycosylation.

It belongs to the glycosyltransferase 31 family. Requires Mn(2+) as cofactor.

Its subcellular location is the golgi apparatus membrane. The protein operates within protein modification; protein glycosylation. Functionally, beta-1,3-galactosyltransferase that transfers galactose from UDP-galactose to substrates with a terminal glycosyl residue. The sequence is that of Probable beta-1,3-galactosyltransferase 12 (B3GALT12) from Arabidopsis thaliana (Mouse-ear cress).